A 103-amino-acid chain; its full sequence is Putative membrane protein insertion efficiency factor (103 aa).

This sequence belongs to the UPF0161 family.

The protein localises to the cell membrane. Could be involved in insertion of integral membrane proteins into the membrane. The chain is Putative membrane protein insertion efficiency factor from Clavibacter michiganensis subsp. michiganensis (strain NCPPB 382).